The sequence spans 202 residues: Large ribosomal subunit protein bL17 (202 aa).

Residues 148-202 are disordered; the sequence is DEAPAAESTDAAQVEAGGVEQPDTLPDADAPATADEGVEVDAAEVDPSDEKKDQA. Over residues 169-182 the composition is skewed to low complexity; that stretch reads PDTLPDADAPATAD. Positions 183 to 194 are enriched in acidic residues; it reads EGVEVDAAEVDP.

This sequence belongs to the bacterial ribosomal protein bL17 family. Part of the 50S ribosomal subunit. Contacts protein L32.

The polypeptide is Large ribosomal subunit protein bL17 (Kineococcus radiotolerans (strain ATCC BAA-149 / DSM 14245 / SRS30216)).